Reading from the N-terminus, the 210-residue chain is Peptidyl-tRNA hydrolase (210 aa).

A tRNA-binding site is contributed by Y15. H20 functions as the Proton acceptor in the catalytic mechanism. The tRNA site is built by F66, N68, and N114. Residues I186–A210 are disordered.

The protein belongs to the PTH family. Monomer.

The protein resides in the cytoplasm. It catalyses the reaction an N-acyl-L-alpha-aminoacyl-tRNA + H2O = an N-acyl-L-amino acid + a tRNA + H(+). Functionally, hydrolyzes ribosome-free peptidyl-tRNAs (with 1 or more amino acids incorporated), which drop off the ribosome during protein synthesis, or as a result of ribosome stalling. In terms of biological role, catalyzes the release of premature peptidyl moieties from peptidyl-tRNA molecules trapped in stalled 50S ribosomal subunits, and thus maintains levels of free tRNAs and 50S ribosomes. The sequence is that of Peptidyl-tRNA hydrolase from Variovorax paradoxus (strain S110).